We begin with the raw amino-acid sequence, 699 residues long: Receptor-type tyrosine-protein phosphatase epsilon (699 aa).

Residues 1–19 (MEPFCPLLLASFSLSLARA) form the signal peptide. Over residues 20–36 (GQGNDTTPTESNWTSTT) the composition is skewed to low complexity. Residues 20–40 (GQGNDTTPTESNWTSTTAGPP) form a disordered region. The Extracellular segment spans residues 20–45 (GQGNDTTPTESNWTSTTAGPPDPGAS). N-linked (GlcNAc...) asparagine glycans are attached at residues asparagine 23 and asparagine 31. Residues 46 to 68 (QPLLTWLLLPLLLLLFLLAAYFF) form a helical membrane-spanning segment. Residues 69–699 (RFRKQRKAVV…DIFSDYANFK (631 aa)) are Cytoplasmic-facing. Tyrosine-protein phosphatase domains follow at residues 134–393 (FREE…LLEY) and 425–688 (LEEE…VQDF). Substrate contacts are provided by residues aspartate 302, 334–340 (CSAGVGR), and glutamine 378. Cysteine 334 acts as the Phosphocysteine intermediate in catalysis. Cysteine 629 acts as the Phosphocysteine intermediate in catalysis. The residue at position 695 (tyrosine 695) is a Phosphotyrosine.

This sequence belongs to the protein-tyrosine phosphatase family. Receptor class 4 subfamily. As to quaternary structure, monomer. Isoform 2: Homodimer. Can form oligomers. Dimerization is increased by oxidative stress and decreased by EGFR. Isoform 2 interacts with GRB2. Post-translationally, a catalytically active cytoplasmic form (p65) is produced by proteolytic cleavage of either isoform 1, isoform 2 or isoform 3. Phosphorylated on tyrosine residues by tyrosine kinase Neu. In terms of processing, glycosylated. As to expression, isoform 2 is expressed in the spleen and thymus (at protein level). Detected in fibroblasts, myeloid cells, macrophages, and T-cells but not in B-cell lines. Isoform 1 and isoform 2 are expressed predominantly in the brain, testes, and lungs, with lower levels present in lymph nodes, thymus, spleen, heart and mammary glands. Isoform 1 is expressed in osteoclasts and not in osteoblasts and its expression is related to osteoclast differentiation. It is also expressed in the erythrocytes. Isoform 2 is strongly expressed in skeletal muscle and L6 skeletal muscle cell line.

It localises to the cell membrane. The protein localises to the cytoplasm. The enzyme catalyses O-phospho-L-tyrosyl-[protein] + H2O = L-tyrosyl-[protein] + phosphate. With respect to regulation, inhibited by alendronate (ALN), orthovanadate, and phenylarsine oxide (PAO). In terms of biological role, acts as a negative regulator of insulin receptor (IR) signaling and is involved in insulin-induced glucose metabolism mainly through direct dephosphorylation and inactivation of IR in hepatocytes and liver. Plays a critical role in signaling transduction pathways and phosphoprotein network topology in red blood cells. May play a role in osteoclast formation and function. Functionally, acts as a negative regulator of insulin receptor (IR) signaling in skeletal muscle. Regulates insulin-induced tyrosine phosphorylation of insulin receptor (IR) and insulin receptor substrate 1 (IRS-1), phosphorylation of protein kinase B and glycogen synthase kinase-3 and insulin induced stimulation of glucose uptake. Isoform 1 and isoform 2 act as a negative regulator of FceRI-mediated signal transduction leading to cytokine production and degranulation, most likely by acting at the level of SYK to affect downstream events such as phosphorylation of SLP76 and LAT and mobilization of Ca(2+). This Mus musculus (Mouse) protein is Receptor-type tyrosine-protein phosphatase epsilon (Ptpre).